The chain runs to 145 residues: Large ribosomal subunit protein uL15 (145 aa).

The disordered stretch occupies residues 1–50 (MRLNTLSPAAGSKPEKQRRGRGIGSGLGKTGGRGVKGQTSRSGGGKVRAG). Residues 22–35 (GIGSGLGKTGGRGV) show a composition bias toward gly residues.

The protein belongs to the universal ribosomal protein uL15 family. In terms of assembly, part of the 50S ribosomal subunit.

Binds to the 23S rRNA. The sequence is that of Large ribosomal subunit protein uL15 from Aeromonas salmonicida (strain A449).